Reading from the N-terminus, the 149-residue chain is Arginine repressor (149 aa).

This sequence belongs to the ArgR family.

The protein resides in the cytoplasm. Its pathway is amino-acid biosynthesis; L-arginine biosynthesis [regulation]. Functionally, regulates arginine biosynthesis genes. The sequence is that of Arginine repressor from Geobacillus thermodenitrificans (strain NG80-2).